A 662-amino-acid chain; its full sequence is DNA topoisomerase 4 subunit B (662 aa).

ATP-binding positions include tyrosine 20, asparagine 60, aspartate 87, 129-135 (GLHGVGV), and lysine 359. One can recognise a Toprim domain in the interval 439-553 (TELFIVEGDS…DGHLYLAKPP (115 aa)). The Mg(2+) site is built by glutamate 445, aspartate 518, and aspartate 520.

This sequence belongs to the type II topoisomerase family. ParE type 1 subfamily. As to quaternary structure, heterotetramer composed of ParC and ParE. Requires Mg(2+) as cofactor. Mn(2+) serves as cofactor. The cofactor is Ca(2+).

The catalysed reaction is ATP-dependent breakage, passage and rejoining of double-stranded DNA.. Its function is as follows. Topoisomerase IV is essential for chromosome segregation. It relaxes supercoiled DNA. Performs the decatenation events required during the replication of a circular DNA molecule. The protein is DNA topoisomerase 4 subunit B of Rickettsia bellii (strain RML369-C).